The sequence spans 104 residues: Integration host factor subunit alpha (104 aa).

The protein belongs to the bacterial histone-like protein family. In terms of assembly, heterodimer of an alpha and a beta chain.

Its function is as follows. This protein is one of the two subunits of integration host factor, a specific DNA-binding protein that functions in genetic recombination as well as in transcriptional and translational control. The protein is Integration host factor subunit alpha of Methylobacterium sp. (strain 4-46).